We begin with the raw amino-acid sequence, 440 residues long: Chromosome partition protein MukF (440 aa).

Residues 208-236 (LSETSGTLRELQDTLEAAGDKLQANLLRI) are leucine-zipper.

It belongs to the MukF family. As to quaternary structure, interacts, and probably forms a ternary complex, with MukE and MukB via its C-terminal region. The complex formation is stimulated by calcium or magnesium. It is required for an interaction between MukE and MukB.

The protein resides in the cytoplasm. Its subcellular location is the nucleoid. Involved in chromosome condensation, segregation and cell cycle progression. May participate in facilitating chromosome segregation by condensation DNA from both sides of a centrally located replisome during cell division. Not required for mini-F plasmid partitioning. Probably acts via its interaction with MukB and MukE. Overexpression results in anucleate cells. It has a calcium binding activity. The sequence is that of Chromosome partition protein MukF from Citrobacter koseri (strain ATCC BAA-895 / CDC 4225-83 / SGSC4696).